The following is a 481-amino-acid chain: Wax ester synthase/diacylglycerol acyltransferase 1 (481 aa).

Residues 1-185 (MKAEKVMERE…TTATKKPADS (185 aa)) are Cytoplasmic-facing. His-147 serves as the catalytic Proton acceptor. Residues 186 to 206 (MAWWLFVGFWFMIRVTFTTIV) traverse the membrane as a helical segment. The Lumenal segment spans residues 207–481 (EFSKLMLTVC…QGEIFHKTEV (275 aa)).

It in the N-terminal section; belongs to the long-chain O-acyltransferase family. In terms of tissue distribution, expressed in flowers, siliques, top parts of stems, and leaves. Not found in roots, seeds and young seedlings.

Its subcellular location is the cell membrane. The protein localises to the endoplasmic reticulum membrane. The catalysed reaction is a long chain fatty alcohol + a fatty acyl-CoA = a wax ester + CoA. It carries out the reaction an acyl-CoA + a 1,2-diacyl-sn-glycerol = a triacyl-sn-glycerol + CoA. It functions in the pathway glycerolipid metabolism; triacylglycerol biosynthesis. The protein operates within lipid metabolism. Its function is as follows. Bifunctional wax ester synthase/diacylglycerol acyltransferase. Involved in cuticular wax biosynthesis. Required to reduce leaf water loss, especially during drought. The protein is Wax ester synthase/diacylglycerol acyltransferase 1 of Arabidopsis thaliana (Mouse-ear cress).